Here is a 72-residue protein sequence, read N- to C-terminus: DNA-directed RNA polymerase subunit epsilon (72 aa).

Belongs to the RNA polymerase subunit epsilon family. In terms of assembly, RNAP is composed of a core of 2 alpha, a beta and a beta' subunit. The core is associated with a delta subunit, and at least one of epsilon or omega. When a sigma factor is associated with the core the holoenzyme is formed, which can initiate transcription.

The catalysed reaction is RNA(n) + a ribonucleoside 5'-triphosphate = RNA(n+1) + diphosphate. A non-essential component of RNA polymerase (RNAP). This Staphylococcus aureus (strain JH1) protein is DNA-directed RNA polymerase subunit epsilon.